The following is a 114-amino-acid chain: Cytokine SCM-1 beta (114 aa).

Residues methionine 1–glycine 21 form the signal peptide. Cysteine 32 and cysteine 69 form a disulfide bridge. Residues arginine 91–glycine 114 are disordered.

Belongs to the intercrine gamma family.

It localises to the secreted. Chemotactic activity for lymphocytes but not for monocytes or neutrophils. The protein is Cytokine SCM-1 beta (XCL2) of Homo sapiens (Human).